Consider the following 751-residue polypeptide: Zinc finger protein 337 (751 aa).

In terms of domain architecture, KRAB spans 12 to 83 (LAFGDVTVDF…ERRRRPGPCA (72 aa)). Low complexity predominate over residues 101–116 (QRQQQLQFSDQSFQSD). Positions 101–163 (QRQQQLQFSD…SSQGQRENPT (63 aa)) are disordered. The segment at 180–202 (FKCAERGQDFSRKMMVIIHKKAH) adopts a C2H2-type 1; degenerate zinc-finger fold. 9 consecutive C2H2-type zinc fingers follow at residues 208–230 (FTCRECHQGFRDESALLLHQNTH), 236–258 (YVCSVCGRGFSLKANLLRHQRTH), 264–286 (FLCKVCGRGYTSKSYLTVHERTH), 292–314 (YECQECGRRFNDKSSYNKHLKAH), 320–342 (FVCKECGRGYTNKSYFVVHKRIH), 348–370 (YRCQECGRGFSNKSHLITHQRTH), 376–398 (FACRQCKQSFSVKGSLLRHQRTH), 404–426 (FVCKDCERSFSQKSTLVYHQRTH), and 432–454 (FVCRECGQGFIQKSTLVKHQITH). Lysine 458 participates in a covalent cross-link: Glycyl lysine isopeptide (Lys-Gly) (interchain with G-Cter in SUMO2). 10 C2H2-type zinc fingers span residues 460-482 (FVCKDCGRGFIQKSTFTLHQRTH), 488-510 (YGCRECGRRFRDKSSYNKHLRAH), 516-538 (FFCRDCGRGFTLKPNLTIHQRTH), 544-566 (FMCKQCEKSFSLKANLLRHQWTH), 572-594 (FNCKDCGRGFILKSTLLFHQKTH), 600-622 (FICSECGQGFIWKSNLVKHQLAH), 628-650 (FVCKECGRGFNWKGNLLTHQRTH), 656-679 (FVCNVCGQGFSWKRSLTRHHWRIH), 685-707 (FVCQECKRGYTSKSDLTVHERIH), and 713-735 (YECQECGRKFSNKSYYSKHLKRH).

This sequence belongs to the krueppel C2H2-type zinc-finger protein family.

It localises to the nucleus. Functionally, may be involved in transcriptional regulation. In Homo sapiens (Human), this protein is Zinc finger protein 337 (ZNF337).